The primary structure comprises 309 residues: Hydroxyacylglutathione hydrolase, mitochondrial (309 aa).

The N-terminal 24 residues, 1-24 (MVLGRGSLCLRSLSALGATCARRG), are a transit peptide targeting the mitochondrion. The residue at position 90 (K90) is an N6-acetyllysine. The Zn(2+) site is built by H103, H105, D107, and H108. At K117 the chain carries N6-acetyllysine. Zn(2+)-binding residues include H159 and D183. Substrate contacts are provided by residues 192–194 (KFY) and 222–224 (HEY). Residue H222 participates in Zn(2+) binding. N6-acetyllysine; alternate is present on K230. An N6-succinyllysine; alternate modification is found at K230. 298–301 (RREK) lines the substrate pocket.

This sequence belongs to the metallo-beta-lactamase superfamily. Glyoxalase II family. Monomer. Requires Zn(2+) as cofactor.

It localises to the mitochondrion matrix. The protein localises to the cytoplasm. It carries out the reaction an S-(2-hydroxyacyl)glutathione + H2O = a 2-hydroxy carboxylate + glutathione + H(+). The enzyme catalyses (R)-S-lactoylglutathione + H2O = (R)-lactate + glutathione + H(+). It participates in secondary metabolite metabolism; methylglyoxal degradation; (R)-lactate from methylglyoxal: step 2/2. In terms of biological role, thiolesterase that catalyzes the hydrolysis of S-D-lactoyl-glutathione to form glutathione and D-lactic acid. In Mus musculus (Mouse), this protein is Hydroxyacylglutathione hydrolase, mitochondrial (Hagh).